Here is a 277-residue protein sequence, read N- to C-terminus: Putative serine/threonine-protein kinase PRKY (277 aa).

Over residues 1 to 12 (MEAPGPAQAAAA) the composition is skewed to low complexity. The interval 1–40 (MEAPGPAQAAAAESNSREVTEDAADWAPALCPSPEARSPE) is disordered. In terms of domain architecture, Protein kinase spans 49 to 277 (CDALVTMGTG…DFHVKTGRMM (229 aa)). ATP-binding positions include 55–63 (MGTGTFGRV) and K78. D172 functions as the Proton acceptor in the catalytic mechanism. T203 is subject to Phosphothreonine.

The protein belongs to the protein kinase superfamily. AGC Ser/Thr protein kinase family. cAMP subfamily. In terms of tissue distribution, ubiquitous.

The catalysed reaction is L-seryl-[protein] + ATP = O-phospho-L-seryl-[protein] + ADP + H(+). It carries out the reaction L-threonyl-[protein] + ATP = O-phospho-L-threonyl-[protein] + ADP + H(+). The protein is Putative serine/threonine-protein kinase PRKY (PRKY) of Homo sapiens (Human).